The sequence spans 128 residues: MTEPEVNPKAYPLADAQLTKTLLDLVQQAANYKQLRKGANEATKTLNRGIAEFIVMAADAEPLEIILHLPLLCEDKNVPYVFVRSKQALGRACGVSRPVIACAVTIKEGSQLKPQIQSLQQSIERLLV.

An interaction with U4 snRNA and U4atac snRNA region spans residues 36–48 (RKGANEATKTLNR). Positions 96–128 (SRPVIACAVTIKEGSQLKPQIQSLQQSIERLLV) are important for U4 snRNA-binding.

This sequence belongs to the eukaryotic ribosomal protein eL8 family. Identified in the spliceosome B complex. Component of the U4/U6-U5 tri-snRNP complex. Part of the small subunit (SSU) processome, composed of more than 70 proteins and the RNA chaperone small nucleolar RNA (snoRNA) U3.

It localises to the nucleus. Its subcellular location is the nucleolus. Its function is as follows. Part of the small subunit (SSU) processome, first precursor of the small eukaryotic ribosomal subunit. During the assembly of the SSU processome in the nucleolus, many ribosome biogenesis factors, an RNA chaperone and ribosomal proteins associate with the nascent pre-rRNA and work in concert to generate RNA folding, modifications, rearrangements and cleavage as well as targeted degradation of pre-ribosomal RNA by the RNA exosome. Involved in pre-mRNA splicing as component of the spliceosome. Binds to the 5'-stem-loop of U4 snRNA and thereby contributes to spliceosome assembly. The protein undergoes a conformational change upon RNA-binding. Core component of box C/D small nucleolar ribonucleoprotein (snoRNP) complexes that function in methylation of multiple sites on ribosomal RNAs (rRNAs) and messenger RNAs (mRNAs). The polypeptide is NHP2-like protein 1 (Xenopus tropicalis (Western clawed frog)).